A 480-amino-acid chain; its full sequence is tRNA (guanine(37)-N(1))-methyltransferase (480 aa).

S-adenosyl-L-methionine contacts are provided by residues H244, 292–293, 321–322, and N342; these read DL and DG.

The protein belongs to the class I-like SAM-binding methyltransferase superfamily. TRM5/TYW2 family. Monomer.

The protein resides in the mitochondrion matrix. The protein localises to the nucleus. It is found in the cytoplasm. The catalysed reaction is guanosine(37) in tRNA + S-adenosyl-L-methionine = N(1)-methylguanosine(37) in tRNA + S-adenosyl-L-homocysteine + H(+). Specifically methylates the N1 position of guanosine-37 in various cytoplasmic and mitochondrial tRNAs. Methylation is not dependent on the nature of the nucleoside 5' of the target nucleoside. This is the first step in the biosynthesis of wybutosine (yW), a modified base adjacent to the anticodon of tRNAs and required for accurate decoding. The protein is tRNA (guanine(37)-N(1))-methyltransferase of Thalassiosira pseudonana (Marine diatom).